The following is a 126-amino-acid chain: Holo-[acyl-carrier-protein] synthase (126 aa).

The Mg(2+) site is built by aspartate 9 and glutamate 58.

It belongs to the P-Pant transferase superfamily. AcpS family. Mg(2+) is required as a cofactor.

It is found in the cytoplasm. It catalyses the reaction apo-[ACP] + CoA = holo-[ACP] + adenosine 3',5'-bisphosphate + H(+). In terms of biological role, transfers the 4'-phosphopantetheine moiety from coenzyme A to a Ser of acyl-carrier-protein. The polypeptide is Holo-[acyl-carrier-protein] synthase (Hamiltonella defensa subsp. Acyrthosiphon pisum (strain 5AT)).